A 700-amino-acid polypeptide reads, in one-letter code: DNA ligase (700 aa).

NAD(+) contacts are provided by residues 61-65 (DAEYD), 110-111 (SL), and glutamate 141. The active-site N6-AMP-lysine intermediate is the lysine 143. Positions 164, 202, 321, and 345 each coordinate NAD(+). Zn(2+) is bound by residues cysteine 439, cysteine 442, cysteine 457, and cysteine 462. In terms of domain architecture, BRCT spans 619–700 (AVSNKLAGLQ…EFLRLLEDSK (82 aa)).

Belongs to the NAD-dependent DNA ligase family. LigA subfamily. Mg(2+) is required as a cofactor. Requires Mn(2+) as cofactor.

It catalyses the reaction NAD(+) + (deoxyribonucleotide)n-3'-hydroxyl + 5'-phospho-(deoxyribonucleotide)m = (deoxyribonucleotide)n+m + AMP + beta-nicotinamide D-nucleotide.. Functionally, DNA ligase that catalyzes the formation of phosphodiester linkages between 5'-phosphoryl and 3'-hydroxyl groups in double-stranded DNA using NAD as a coenzyme and as the energy source for the reaction. It is essential for DNA replication and repair of damaged DNA. This Hydrogenobaculum sp. (strain Y04AAS1) protein is DNA ligase.